The following is a 102-amino-acid chain: Small ribosomal subunit protein uS10 (102 aa).

The protein belongs to the universal ribosomal protein uS10 family. As to quaternary structure, part of the 30S ribosomal subunit.

Involved in the binding of tRNA to the ribosomes. This is Small ribosomal subunit protein uS10 from Methanosphaera stadtmanae (strain ATCC 43021 / DSM 3091 / JCM 11832 / MCB-3).